We begin with the raw amino-acid sequence, 166 residues long: Probable chemoreceptor glutamine deamidase CheD (166 aa).

The protein belongs to the CheD family.

The catalysed reaction is L-glutaminyl-[protein] + H2O = L-glutamyl-[protein] + NH4(+). In terms of biological role, probably deamidates glutamine residues to glutamate on methyl-accepting chemotaxis receptors (MCPs), playing an important role in chemotaxis. The protein is Probable chemoreceptor glutamine deamidase CheD of Desulforamulus reducens (strain ATCC BAA-1160 / DSM 100696 / MI-1) (Desulfotomaculum reducens).